The sequence spans 122 residues: Large ribosomal subunit protein uL14 (122 aa).

Belongs to the universal ribosomal protein uL14 family. Part of the 50S ribosomal subunit. Forms a cluster with proteins L3 and L19. In the 70S ribosome, L14 and L19 interact and together make contacts with the 16S rRNA in bridges B5 and B8.

Its function is as follows. Binds to 23S rRNA. Forms part of two intersubunit bridges in the 70S ribosome. This Rickettsia massiliae (strain Mtu5) protein is Large ribosomal subunit protein uL14.